The sequence spans 802 residues: Vacuolar membrane protease (802 aa).

The Cytoplasmic portion of the chain corresponds to 1-13; it reads MARYNPLAFTSGP. A helical transmembrane segment spans residues 14-34; the sequence is VVFFITITYTALLIALLLTHL. The Vacuolar portion of the chain corresponds to 35-357; that stretch reads TLPSYPSHPP…KVFIVFQLHT (323 aa). N-linked (GlcNAc...) asparagine glycans are attached at residues N48, N102, N105, and N112. Residues H152 and D164 each contribute to the Zn(2+) site. E198 (proton acceptor) is an active-site residue. Zn(2+) contacts are provided by E199, E224, and H297. The chain crosses the membrane as a helical span at residues 358–378; the sequence is FFALCVTLLVVAPLTLIGLAW. Residues 379–389 lie on the Cytoplasmic side of the membrane; the sequence is SLHKADRNYLF. A helical membrane pass occupies residues 390 to 409; sequence ARKAFVYSADDDEPIHLYGW. The Vacuolar portion of the chain corresponds to 410-423; sequence RGFFRFPIAFGIAT. Residues 424–444 traverse the membrane as a helical segment; sequence SIVVGLAMMLSAWFAVSWFLL. Residues 445-457 are Cytoplasmic-facing; that stretch reads HGADAMRPSALQR. The chain crosses the membrane as a helical span at residues 458–478; sequence MYSLLWLFIGSFCLLVFFTIL. The Vacuolar portion of the chain corresponds to 479-490; the sequence is ANNHQVAAGYPS. The chain crosses the membrane as a helical span at residues 491 to 511; that stretch reads LFCFATVFLANVLSFLELFLA. Residues 512–609 lie on the Cytoplasmic side of the membrane; that stretch reads PPKSAYAWNV…EQEWSGKLPS (98 aa). Disordered stretches follow at residues 528-554 and 570-603; these read GSRPLTSSATAARSDNRATTDDDATET and AGRRDAINEGANSQEPESRRRLDLGQPHSGEQEW. Residues 610 to 630 form a helical membrane-spanning segment; that stretch reads WIWIVQFSLLAPMIVILVGQI. Topologically, residues 631–649 are vacuolar; the sequence is ALLLTSALYQTPSDGNSPL. Residues 650 to 670 form a helical membrane-spanning segment; the sequence is YIYTSIAALAVFLVAPIGPFI. Topologically, residues 671-677 are cytoplasmic; sequence HRFTHHV. The chain crosses the membrane as a helical span at residues 678 to 698; sequence PTFLFLLCVATTIYNLVAFPF. The Vacuolar portion of the chain corresponds to 699-802; sequence SEQHKLKVYF…HDDSNNRGRR (104 aa). N-linked (GlcNAc...) asparagine glycosylation is found at N746 and N779.

Belongs to the peptidase M28 family. It depends on Zn(2+) as a cofactor.

It is found in the vacuole membrane. Functionally, may be involved in vacuolar sorting and osmoregulation. The sequence is that of Vacuolar membrane protease from Leptosphaeria maculans (strain JN3 / isolate v23.1.3 / race Av1-4-5-6-7-8) (Blackleg fungus).